The following is a 295-amino-acid chain: Putative nudix hydrolase 7 (295 aa).

Residues 9-182 (SWRSAASIIL…KYALPPPQVY (174 aa)) enclose the Nudix hydrolase domain. The short motif at 52–73 (TDAKLGDEFRIAAVRELFEESG) is the Nudix box element. 2 residues coordinate Mg(2+): glutamate 67 and glutamate 71.

It belongs to the Nudix hydrolase family. The cofactor is Mg(2+). It depends on Mn(2+) as a cofactor.

Its function is as follows. Probably mediates the hydrolysis of some nucleoside diphosphate derivatives. The chain is Putative nudix hydrolase 7 (ndx-7) from Caenorhabditis elegans.